The following is a 610-amino-acid chain: ATP-dependent zinc metalloprotease FtsH (610 aa).

The Cytoplasmic portion of the chain corresponds to 1–3; it reads MAK. A helical transmembrane segment spans residues 4-24; it reads NLMLWLVIAVVLMSIFQNFSA. Residues 25–97 are Extracellular-facing; the sequence is NNINNRKIDY…IIGAAPEEQS (73 aa). Residues 98–118 traverse the membrane as a helical segment; sequence FFTAIFISWFPMLLLIGVWVF. The Cytoplasmic portion of the chain corresponds to 119-610; sequence FMRQMQVGGG…SNICTDDDNN (492 aa). 192–199 provides a ligand contact to ATP; the sequence is GPPGTGKT. His414 is a binding site for Zn(2+). The active site involves Glu415. Positions 418 and 492 each coordinate Zn(2+).

This sequence in the central section; belongs to the AAA ATPase family. The protein in the C-terminal section; belongs to the peptidase M41 family. In terms of assembly, homohexamer. It depends on Zn(2+) as a cofactor.

The protein resides in the cell membrane. Functionally, acts as a processive, ATP-dependent zinc metallopeptidase for both cytoplasmic and membrane proteins. Plays a role in the quality control of integral membrane proteins. The protein is ATP-dependent zinc metalloprotease FtsH of Buchnera aphidicola subsp. Baizongia pistaciae (strain Bp).